Consider the following 202-residue polypeptide: NADH-quinone oxidoreductase subunit B (202 aa).

[4Fe-4S] cluster contacts are provided by cysteine 81, cysteine 82, cysteine 146, and cysteine 176.

It belongs to the complex I 20 kDa subunit family. As to quaternary structure, NDH-1 is composed of 14 different subunits. Subunits NuoB, C, D, E, F, and G constitute the peripheral sector of the complex. [4Fe-4S] cluster serves as cofactor.

It is found in the cell inner membrane. It carries out the reaction a quinone + NADH + 5 H(+)(in) = a quinol + NAD(+) + 4 H(+)(out). Functionally, NDH-1 shuttles electrons from NADH, via FMN and iron-sulfur (Fe-S) centers, to quinones in the respiratory chain. The immediate electron acceptor for the enzyme in this species is believed to be ubiquinone. Couples the redox reaction to proton translocation (for every two electrons transferred, four hydrogen ions are translocated across the cytoplasmic membrane), and thus conserves the redox energy in a proton gradient. The polypeptide is NADH-quinone oxidoreductase subunit B (Bradyrhizobium diazoefficiens (strain JCM 10833 / BCRC 13528 / IAM 13628 / NBRC 14792 / USDA 110)).